Reading from the N-terminus, the 198-residue chain is Holliday junction resolvase RecU (198 aa).

The interval 1–29 is disordered; it reads MIRYPNGKSYQPKTAASSLQKKPSYSNRG. Polar residues predominate over residues 8–29; sequence KSYQPKTAASSLQKKPSYSNRG. Mg(2+)-binding residues include Thr-83, Asp-85, Glu-98, and Gln-117.

This sequence belongs to the RecU family. Mg(2+) is required as a cofactor.

It localises to the cytoplasm. The catalysed reaction is Endonucleolytic cleavage at a junction such as a reciprocal single-stranded crossover between two homologous DNA duplexes (Holliday junction).. Functionally, endonuclease that resolves Holliday junction intermediates in genetic recombination. Cleaves mobile four-strand junctions by introducing symmetrical nicks in paired strands. Promotes annealing of linear ssDNA with homologous dsDNA. Required for DNA repair, homologous recombination and chromosome segregation. This Bacillus licheniformis (strain ATCC 14580 / DSM 13 / JCM 2505 / CCUG 7422 / NBRC 12200 / NCIMB 9375 / NCTC 10341 / NRRL NRS-1264 / Gibson 46) protein is Holliday junction resolvase RecU.